The chain runs to 359 residues: MRQILFAAGIALAVSILLTPVLIKAFSRQGFGQEIRVEGPASHQSKRGTPTMGGVAILAGLWAGYWGSHLIGIGYNADGPSASGLLVLGLTTALGGVGFLDDFIKIRKQRNLGLNKTAKLVGQLIAAVAFGILALQFRGANDLTPGSEHLSYVRDIATVTMGSVVFVAFCYLLVSAWSNAVNLTDGLDGLAAGSMSLVLGAYVIITFWQYRNACETSPGKGCYDVRDPLDLALICAAGAGACIGFLWWNAAPAKIFMGDTGSLALGGMLAGLSITTRTELLMVVIGALFVAEAASVVIQVAVFRSSRRRVFRMAPFHHHFELAGWAETTVIIRFWLLAAIASAIGLALFYSEYLAAIGG.

Transmembrane regions (helical) follow at residues 3–23 (QILF…PVLI), 53–73 (GGVA…LIGI), 84–104 (GLLV…DDFI), 117–137 (TAKL…ALQF), 156–176 (IATV…LVSA), 187–207 (LDGL…IITF), 231–251 (LALI…WNAA), 255–275 (IFMG…LSIT), 283–303 (VVIG…VAVF), and 330–350 (VIIR…ALFY).

The protein belongs to the glycosyltransferase 4 family. MraY subfamily. Mg(2+) serves as cofactor.

It localises to the cell membrane. It catalyses the reaction UDP-N-acetyl-alpha-D-muramoyl-L-alanyl-gamma-D-glutamyl-meso-2,6-diaminopimeloyl-D-alanyl-D-alanine + di-trans,octa-cis-undecaprenyl phosphate = di-trans,octa-cis-undecaprenyl diphospho-N-acetyl-alpha-D-muramoyl-L-alanyl-D-glutamyl-meso-2,6-diaminopimeloyl-D-alanyl-D-alanine + UMP. The protein operates within cell wall biogenesis; peptidoglycan biosynthesis. In terms of biological role, catalyzes the initial step of the lipid cycle reactions in the biosynthesis of the cell wall peptidoglycan: transfers peptidoglycan precursor phospho-MurNAc-pentapeptide from UDP-MurNAc-pentapeptide onto the lipid carrier undecaprenyl phosphate, yielding undecaprenyl-pyrophosphoryl-MurNAc-pentapeptide, known as lipid I. The protein is Phospho-N-acetylmuramoyl-pentapeptide-transferase of Rhodococcus jostii (strain RHA1).